Here is a 446-residue protein sequence, read N- to C-terminus: Exodeoxyribonuclease 7 large subunit (446 aa).

The protein belongs to the XseA family. In terms of assembly, heterooligomer composed of large and small subunits.

Its subcellular location is the cytoplasm. The enzyme catalyses Exonucleolytic cleavage in either 5'- to 3'- or 3'- to 5'-direction to yield nucleoside 5'-phosphates.. In terms of biological role, bidirectionally degrades single-stranded DNA into large acid-insoluble oligonucleotides, which are then degraded further into small acid-soluble oligonucleotides. The protein is Exodeoxyribonuclease 7 large subunit of Streptococcus pneumoniae (strain Taiwan19F-14).